We begin with the raw amino-acid sequence, 474 residues long: Phenylalanine--tRNA ligase alpha subunit (474 aa).

Residues Thr317, 356–358, and Tyr396 each bind L-phenylalanine; that span reads QLE. Glu398 lines the Mg(2+) pocket. Phe421 serves as a coordination point for L-phenylalanine.

The protein belongs to the class-II aminoacyl-tRNA synthetase family. Phe-tRNA synthetase alpha subunit type 2 subfamily. In terms of assembly, tetramer of two alpha and two beta subunits. The cofactor is Mg(2+).

It is found in the cytoplasm. It catalyses the reaction tRNA(Phe) + L-phenylalanine + ATP = L-phenylalanyl-tRNA(Phe) + AMP + diphosphate + H(+). This Methanocorpusculum labreanum (strain ATCC 43576 / DSM 4855 / Z) protein is Phenylalanine--tRNA ligase alpha subunit.